We begin with the raw amino-acid sequence, 256 residues long: 1-(5-phosphoribosyl)-5-[(5-phosphoribosylamino)methylideneamino] imidazole-4-carboxamide isomerase (256 aa).

The Proton acceptor role is filled by D8. The active-site Proton donor is D129.

It belongs to the HisA/HisF family.

The protein resides in the cytoplasm. The enzyme catalyses 1-(5-phospho-beta-D-ribosyl)-5-[(5-phospho-beta-D-ribosylamino)methylideneamino]imidazole-4-carboxamide = 5-[(5-phospho-1-deoxy-D-ribulos-1-ylimino)methylamino]-1-(5-phospho-beta-D-ribosyl)imidazole-4-carboxamide. It functions in the pathway amino-acid biosynthesis; L-histidine biosynthesis; L-histidine from 5-phospho-alpha-D-ribose 1-diphosphate: step 4/9. The sequence is that of 1-(5-phosphoribosyl)-5-[(5-phosphoribosylamino)methylideneamino] imidazole-4-carboxamide isomerase from Prochlorococcus marinus (strain NATL2A).